Consider the following 389-residue polypeptide: Aspartic protease 6 (389 aa).

A signal peptide spans 1–15 (MKTFILLAVLGLASA). In terms of domain architecture, Peptidase A1 spans 71–384 (YLGNITIGTP…DIGNKRMGFA (314 aa)). The N-linked (GlcNAc...) asparagine glycan is linked to Asn-74. Asp-89 is a catalytic residue. An intrachain disulfide couples Cys-102 to Cys-106. Asp-277 is an active-site residue. A disulfide bond links Cys-312 and Cys-344.

The protein belongs to the peptidase A1 family. Glycosylated. Has phosphorylcholine-substituted oligosaccharide N-glycans. As to expression, expressed in intestine, muscles, pharynx and hypodermis.

It is found in the secreted. Aspartic protease. In Caenorhabditis elegans, this protein is Aspartic protease 6.